A 404-amino-acid chain; its full sequence is MAELKLISAESVTEGHPDKVCDQISDAILDDMLAQDPHSHVAVETCATVGQFFVFGEVTSEGYSDIQNIVRSVVRNIGYTSSRVGLDADSCGVTVSLTEQSPEINQGVARLSGEEESKASREQRYEAQGAGDQGVMFGYACDETDVLMPLPIHLAHRLAYRLAEVRKSGEVPHLRPDGKTQVTIEYDDDDHPVRLDTVLVSTQHDPEVDQAWLKEQLTEHVIRPVLDDVLADRVAHDEYRVLVNPTGSFILGGPAADAGLTGRKIIVDTYGGAAHHGGGAFSGKDPSKVDRSAAYAARWVAKNIVAAGLAHKVEVQVAYAIGVADPVSINVETYGTEIGVTREQIQQAVRKVFDLRPAAIIDELDLKRPIYSKTAAYGHFGREDADFTWEATNKVDELKEAIKA.

Histidine 16 provides a ligand contact to ATP. Position 18 (aspartate 18) interacts with Mg(2+). Glutamate 44 contributes to the K(+) binding site. L-methionine contacts are provided by glutamate 57 and glutamine 100. The tract at residues 100–110 (QSPEINQGVAR) is flexible loop. ATP is bound by residues 177 to 179 (DGK), aspartate 257, 263 to 264 (RK), alanine 280, and lysine 284. Aspartate 257 serves as a coordination point for L-methionine. Position 288 (lysine 288) interacts with L-methionine.

Belongs to the AdoMet synthase family. In terms of assembly, homotetramer; dimer of dimers. Requires Mg(2+) as cofactor. K(+) serves as cofactor.

It is found in the cytoplasm. It carries out the reaction L-methionine + ATP + H2O = S-adenosyl-L-methionine + phosphate + diphosphate. It participates in amino-acid biosynthesis; S-adenosyl-L-methionine biosynthesis; S-adenosyl-L-methionine from L-methionine: step 1/1. Its function is as follows. Catalyzes the formation of S-adenosylmethionine (AdoMet) from methionine and ATP. The overall synthetic reaction is composed of two sequential steps, AdoMet formation and the subsequent tripolyphosphate hydrolysis which occurs prior to release of AdoMet from the enzyme. The sequence is that of S-adenosylmethionine synthase from Bifidobacterium adolescentis (strain ATCC 15703 / DSM 20083 / NCTC 11814 / E194a).